Here is a 462-residue protein sequence, read N- to C-terminus: Retinoic acid receptor RXR-alpha (462 aa).

A disordered region spans residues 1 to 107 (MDTKHFLPLD…MNPVSSSEDI (107 aa)). The segment at 1-134 (MDTKHFLPLD…GNMASFTKHI (134 aa)) is modulating. A Glycyl lysine isopeptide (Lys-Gly) (interchain with G-Cter in SUMO2) cross-link involves residue Lys4. The segment covering 11-24 (FSTQVNSSLTSPTG) has biased composition (polar residues). A phosphoserine mark is found at Ser21 and Ser27. A compositionally biased stretch (polar residues) spans 49–58 (SPISTLSSPI). Phosphoserine; by MAPK8 and MAPK9 is present on residues Ser56 and Ser70. The segment covering 78-104 (SVPTTPTLGFSTGSPQLSSPMNPVSSS) has biased composition (polar residues). Phosphothreonine; by MAPK8 and MAPK9 is present on Thr82. Residue Lys108 forms a Glycyl lysine isopeptide (Lys-Gly) (interchain with G-Cter in SUMO) linkage. Ser129 carries the post-translational modification Phosphoserine. Residues Cys135 and Cys138 each coordinate Zn(2+). Residues 135 to 155 (CAICGDRSSGKHYGVYSCEGC) form an NR C4-type zinc finger. The segment at residues 135–200 (CAICGDRSSG…RYQKCLAMGM (66 aa)) is a DNA-binding region (nuclear receptor). Lys145 carries the post-translational modification N6-acetyllysine; by EP300. Zn(2+)-binding residues include Cys152 and Cys155. A nuclear localization signal region spans residues 160-165 (KRTVRK). The Zn(2+) site is built by Cys171, Cys177, Cys187, and Cys190. The NR C4-type zinc-finger motif lies at 171 to 195 (CRDNKDCLIDKRQRNRCQYCRYQKC). The hinge stretch occupies residues 201–224 (KREAVQEERQRGKDRNENEVESTS). Residues 206 to 218 (QEERQRGKDRNEN) show a composition bias toward basic and acidic residues. Residues 206 to 228 (QEERQRGKDRNENEVESTSSANE) are disordered. The NR LBD domain occupies 227 to 458 (NEDMPVERIL…TFLMEMLEAP (232 aa)). Ser259 bears the Phosphoserine mark. Ser260 carries the post-translational modification Phosphoserine; by MAPK8 and MAPK9. Positions 316 and 327 each coordinate 9-cis-retinoate. 2 residues coordinate all-trans-retinoate: Arg316 and Ala327. Residues 348–368 (RVLTELVSKMRDMQMDKTELG) are required for nuclear export.

It belongs to the nuclear hormone receptor family. NR2 subfamily. In terms of assembly, homodimer. Heterodimer (via C-terminus) with RARA; required for ligand-dependent retinoic acid receptor transcriptional activity; association with RARA is enhanced by pulsatile shear stress. Heterodimer with PPARA (via the leucine-like zipper in the LBD); the interaction is required for PPARA transcriptional activity. Heterodimerizes with PPARG. Heterodimerizes (via NR LBD) with RARB. Heterodimerizes with NR1H4; the heterodimerization enhances the binding affinity for LXXLL motifs from coactivators. Interacts with NCOA3 and NCOA6 coactivators. Interacts with coactivator FAM120B. Interacts with coactivator PELP1, SENP6, SFPQ, DNTTIP2 and RNF8. Interacts with PRMT2. Interacts with ASXL1. Interacts with BHLHE40/DEC1, BHLHE41/DEC2, NCOR1 and NCOR2. Interacts in a ligand-dependent fashion with MED1 and NCOA1. Interacts with VDR. Interacts with EP300; the interaction is decreased by 9-cis retinoic acid. Heterodimer (via C-terminus) with NR4A1 (via DNA-binding domain); DNA-binding of the heterodimer is enhanced by 9-cis retinoic acid. NR4A1 competes with EP300 for interaction with RXRA and thereby attenuates EP300 mediated acetylation of RXRA. In the absence of hormonal ligand, interacts with TACC1. Interacts ith IGFBP3. (Microbial infection) Interacts (via the DNA binding domain) with HCV core protein; the interaction enhances the transcriptional activities of the RXRA/RARA and the RXRA/PPARA heterodimers. Post-translationally, acetylated by EP300; acetylation enhances DNA binding and transcriptional activity. Phosphorylated on serine and threonine residues mainly in the N-terminal modulating domain. Constitutively phosphorylated on Ser-21 in the presence or absence of ligand. Under stress conditions, hyperphosphorylated by activated JNK on Ser-56, Ser-70, Thr-82 and Ser-260. Phosphorylated on Ser-27, in vitro, by PKA. This phosphorylation is required for repression of cAMP-mediated transcriptional activity of RARA. In terms of processing, ubiquitinated by UBR5, leading to its degradation: UBR5 specifically recognizes and binds ligand-bound RXRA when it is not associated with coactivators (NCOAs). In presence of NCOAs, the UBR5-degron is not accessible, preventing its ubiquitination and degradation. Post-translationally, sumoylation negatively regulates transcriptional activity. Desumoylated specifically by SENP6. As to expression, expressed in lung fibroblasts (at protein level). Expressed in monocytes. Highly expressed in liver, also found in kidney and brain.

The protein resides in the nucleus. The protein localises to the cytoplasm. It localises to the mitochondrion. In terms of biological role, receptor for retinoic acid that acts as a transcription factor. Forms homo- or heterodimers with retinoic acid receptors (RARs) and binds to target response elements in response to their ligands, all-trans or 9-cis retinoic acid, to regulate gene expression in various biological processes. The RAR/RXR heterodimers bind to the retinoic acid response elements (RARE) composed of tandem 5'-AGGTCA-3' sites known as DR1-DR5 to regulate transcription. The high affinity ligand for retinoid X receptors (RXRs) is 9-cis retinoic acid. In the absence of ligand, the RXR-RAR heterodimers associate with a multiprotein complex containing transcription corepressors that induce histone deacetylation, chromatin condensation and transcriptional suppression. On ligand binding, the corepressors dissociate from the receptors and coactivators are recruited leading to transcriptional activation. Serves as a common heterodimeric partner for a number of nuclear receptors, such as RARA, RARB and PPARA. The RXRA/RARB heterodimer can act as a transcriptional repressor or transcriptional activator, depending on the RARE DNA element context. The RXRA/PPARA heterodimer is required for PPARA transcriptional activity on fatty acid oxidation genes such as ACOX1 and the P450 system genes. Together with RARA, positively regulates microRNA-10a expression, thereby inhibiting the GATA6/VCAM1 signaling response to pulsatile shear stress in vascular endothelial cells. Acts as an enhancer of RARA binding to RARE DNA element. May facilitate the nuclear import of heterodimerization partners such as VDR and NR4A1. Promotes myelin debris phagocytosis and remyelination by macrophages. Plays a role in the attenuation of the innate immune system in response to viral infections, possibly by negatively regulating the transcription of antiviral genes such as type I IFN genes. Involved in the regulation of calcium signaling by repressing ITPR2 gene expression, thereby controlling cellular senescence. In Homo sapiens (Human), this protein is Retinoic acid receptor RXR-alpha (RXRA).